Reading from the N-terminus, the 315-residue chain is DDRGK domain-containing protein 1 (315 aa).

The helical transmembrane segment at 1–28 threads the bilayer; that stretch reads MVGPWVYLVAAVLLIGLILFLTRSRGRA. The interval 1–115 is mediates interaction with CDK5RAP3; the sequence is MVGPWVYLVA…IEKPAEVHPT (115 aa). The Cytoplasmic segment spans residues 29–315; sequence AAADGEPLHN…GQDLPAQASA (287 aa). The segment at 30-184 is disordered; that stretch reads AADGEPLHNE…ERKAQEEQAR (155 aa). Residues 34–43 show a composition bias toward basic and acidic residues; sequence EPLHNEEERA. S73 carries the phosphoserine modification. The interval 119–217 is mediates interaction with TRIP4; the sequence is GAKKLRKLEE…MTEEQSHSFL (99 aa). The segment covering 125–184 has biased composition (basic and acidic residues); it reads KLEEKQARKAQREAEEAEREERKRLESQREAEWKKEEERLRLKEEQKEEEERKAQEEQAR. A UFM1-interacting motif (UFIM) motif is present at residues 196–210; the sequence is AFVVEEEGVSETMTE. Residues 217-315 form a mediates interaction with UFL1 region; the sequence is LTEFINYIKK…GQDLPAQASA (99 aa). The PCI domain occupies 230–274; that stretch reads VLLEDLAFQMGLRTQDAINRIQDLLTEGTLTGVIDDRGKFIYITP. Residue K268 forms a Glycyl lysine isopeptide (Lys-Gly) (interchain with G-Cter in UFM1) linkage.

It belongs to the DDRGK1 family. Component of the UFM1 ribosome E3 ligase (UREL) complex, composed of UFL1, DDRGK1 and CDK5RAP3. Interacts with (unphosphorylated) ERN1/IRE1-alpha; interaction is dependent on UFM1 and takes place in response to endoplasmic reticulum stress, regulating ERN1/IRE1-alpha stability. Interacts with NFKBIA. Interacts with SOX9. Ufmylated; conjugated to ubiquitin-like protein UFM1, probably at Lys-268 by UFL1. The relevance of ufmylation is however unclear: as DDRGK1 acts as a substrate adapter for ufmylation, it is uncertain whether ufmylation is a collateral effect of the ufmylation process or whether it is required to regulate its activity. Post-translationally, ubiquitinated. Ubiquitination probably triggers proteasomal degradation and is negatively regulated by UFL1, the enzyme involved in the ufmylation of DDRGK1. Ubiquitously expressed. Higher expression in pancreatic islets, pancreatic acini and testis (at protein level). Highly expressed in the intestinal exocrine cells.

The protein resides in the endoplasmic reticulum membrane. Functionally, component of the UFM1 ribosome E3 ligase (UREL) complex, a multiprotein complex that catalyzes ufmylation of endoplasmic reticulum-docked proteins. The UREL complex plays a key role in ribosome recycling by mediating mono-ufmylation of the RPL26/uL24 subunit of the 60S ribosome following ribosome dissociation: ufmylation weakens the junction between post-termination 60S subunits and SEC61 translocons, promoting release and recycling of the large ribosomal subunit from the endoplasmic reticulum membrane. Ufmylation of RPL26/uL24 and subsequent 60S ribosome recycling either take place after normal termination of translation or after ribosome stalling during cotranslational translocation at the endoplasmic reticulum. Within the UREL complex, DDRGK1 tethers the complex to the endoplasmic reticulum membrane to restrict its activity to endoplasmic reticulum-docked ribosomes and acts as an ufmylation 'reader': following RPL26/uL24 ufmylation, DDRGK1 specifically binds to ufmylated RPL26/uL24 via its UFIM motif, resulting in stable association between the 60S ribosome and the UREL complex, followed by dissociation of the 60S ribosome subunit from the endoplasmic reticulum membrane. The UREL complex is also involved in reticulophagy in response to endoplasmic reticulum stress by promoting ufmylation of proteins such as CYB5R3 and RPN1, thereby promoting lysosomal degradation of ufmylated proteins. Ufmylation-dependent reticulophagy inhibits the unfolded protein response (UPR) by regulating ERN1/IRE1-alpha stability. Acts as a regulator of immunity by promoting differentiation of B-cells into plasma cells: acts by promoting expansion of the endoplasmic reticulum and regulating the unfolded protein response (UPR). May also be required for TRIP4 ufmylation. May play a role in NF-kappa-B-mediated transcription through regulation of the phosphorylation and the degradation of NFKBIA, the inhibitor of NF-kappa-B. Plays a role in cartilage development through SOX9, inhibiting the ubiquitin-mediated proteasomal degradation of this transcriptional regulator. Required for stabilization and ufmylation of ATG9A. The polypeptide is DDRGK domain-containing protein 1 (Mus musculus (Mouse)).